The sequence spans 174 residues: Large ribosomal subunit protein bL12cy (174 aa).

The transit peptide at 1–45 (MASTTFSSAFSILSLPSSSPSPPPWAPRTLPVANRRRRAAAVAST) directs the protein to the chloroplast.

The protein belongs to the bacterial ribosomal protein bL12 family.

Its subcellular location is the plastid. The protein resides in the chloroplast. The protein is Large ribosomal subunit protein bL12cy (RPL12-2) of Secale cereale (Rye).